Consider the following 782-residue polypeptide: Probable methionine--tRNA ligase, cytoplasmic (782 aa).

Positions 231–241 (PYVNNVPHLGN) match the 'HIGH' region motif. The 'KMSKS' region signature appears at 551 to 555 (KFSKS).

This sequence belongs to the class-I aminoacyl-tRNA synthetase family.

Its subcellular location is the cytoplasm. It carries out the reaction tRNA(Met) + L-methionine + ATP = L-methionyl-tRNA(Met) + AMP + diphosphate. The chain is Probable methionine--tRNA ligase, cytoplasmic (rar1) from Schizosaccharomyces pombe (strain 972 / ATCC 24843) (Fission yeast).